A 192-amino-acid chain; its full sequence is Small ribosomal subunit protein uS5 (192 aa).

The S5 DRBM domain maps to phenylalanine 20 to valine 83. A disordered region spans residues serine 162–alanine 192.

This sequence belongs to the universal ribosomal protein uS5 family. As to quaternary structure, part of the 30S ribosomal subunit. Contacts proteins S4 and S8.

Functionally, with S4 and S12 plays an important role in translational accuracy. Located at the back of the 30S subunit body where it stabilizes the conformation of the head with respect to the body. The polypeptide is Small ribosomal subunit protein uS5 (Methylorubrum populi (strain ATCC BAA-705 / NCIMB 13946 / BJ001) (Methylobacterium populi)).